The following is a 139-amino-acid chain: ATP synthase epsilon chain (139 aa).

This sequence belongs to the ATPase epsilon chain family. As to quaternary structure, F-type ATPases have 2 components, CF(1) - the catalytic core - and CF(0) - the membrane proton channel. CF(1) has five subunits: alpha(3), beta(3), gamma(1), delta(1), epsilon(1). CF(0) has three main subunits: a, b and c.

It is found in the cell inner membrane. Functionally, produces ATP from ADP in the presence of a proton gradient across the membrane. In Nitrosospira multiformis (strain ATCC 25196 / NCIMB 11849 / C 71), this protein is ATP synthase epsilon chain.